Here is a 394-residue protein sequence, read N- to C-terminus: Arogenate dehydratase 2 (394 aa).

A disordered region spans residues 1–24; the sequence is MAATTTLRSPKIPHPPPESTPSNL. The N-terminal 47 residues, 1 to 47, are a transit peptide targeting the chloroplast; it reads MAATTTLRSPKIPHPPPESTPSNLSYLSQISLTPVPKRRRFISIYAC. The 176-residue stretch at 108 to 283 folds into the Prephenate dehydratase domain; sequence RVAYQGVRGA…NVTRFLMLAR (176 aa). An ACT domain is found at 297-388; sequence SVVFSLDEGP…TFLRVLGSYP (92 aa).

Expressed at low levels in petals (corollas and tubes), stems, leaves, pistils, stamens, ovaries and sepals.

It localises to the plastid. The protein localises to the chloroplast stroma. The enzyme catalyses prephenate + H(+) = 3-phenylpyruvate + CO2 + H2O. The catalysed reaction is L-arogenate + H(+) = L-phenylalanine + CO2 + H2O. It functions in the pathway amino-acid biosynthesis; L-phenylalanine biosynthesis; L-phenylalanine from L-arogenate: step 1/1. Its function is as follows. Converts the prephenate and L-arogenate produced from the shikimate-chorismate pathway into 3-phenylpyruvate and phenylalanine (Phe), respectively. Involved in floral volatile benzenoids and phenylpropanoids (FVBP) production. This is Arogenate dehydratase 2 from Petunia hybrida (Petunia).